Here is an 839-residue protein sequence, read N- to C-terminus: Taste receptor type 1 member 2 (839 aa).

The first 19 residues, 1–19, serve as a signal peptide directing secretion; it reads MGPRAKTICSLFFLLWVLA. Residues 20–566 are Extracellular-facing; sequence EPAENSDFYL…VFLEWHEAPT (547 aa). N-linked (GlcNAc...) asparagine glycans are attached at residues Asn-84, Asn-248, Asn-292, Asn-312, Asn-368, Asn-407, Asn-428, Asn-487, and Asn-527. A helical transmembrane segment spans residues 567 to 587; it reads IAVALLAALGFLSTLAILVIF. At 588-602 the chain is on the cytoplasmic side; it reads WRHFQTPIVRSAGGP. The helical transmembrane segment at 603-623 threads the bilayer; it reads MCFLMLTLLLVAYMVVPVYVG. Residues 624–635 are Extracellular-facing; that stretch reads PPKVSTCLCRQA. The chain crosses the membrane as a helical span at residues 636-656; sequence LFPLCFTICISCIAVRSFQIV. Over 657–681 the chain is Cytoplasmic; the sequence is CAFKMASRFPRAYSYWVRYQGPYVS. A helical transmembrane segment spans residues 682 to 702; the sequence is MAFITVLKMVIVVIGMLATGL. At 703-727 the chain is on the extracellular side; sequence SPTTRTDPDDPKITIVSCNPNYRNS. Residues 728–748 traverse the membrane as a helical segment; the sequence is LLFNTSLDLLLSVVGFSFAYM. The Cytoplasmic segment spans residues 749–760; sequence GKELPTNYNEAK. The helical transmembrane segment at 761–781 threads the bilayer; the sequence is FITLSMTFYFTSSVSLCTFMS. Residues 782–784 are Extracellular-facing; it reads AYS. The helical transmembrane segment at 785-805 threads the bilayer; the sequence is GVLVTIVDLLVTVLNLLAISL. The Cytoplasmic portion of the chain corresponds to 806–839; the sequence is GYFGPKCYMILFYPERNTSAYFNSMIQGYTMRRD.

The protein belongs to the G-protein coupled receptor 3 family. TAS1R subfamily. Forms heterodimers with TAS1R3.

Its subcellular location is the cell membrane. Its function is as follows. Putative taste receptor. TAS1R2/TAS1R3 recognizes diverse natural and synthetic sweeteners. The polypeptide is Taste receptor type 1 member 2 (TAS1R2) (Pan troglodytes (Chimpanzee)).